Consider the following 388-residue polypeptide: Succinate--CoA ligase [ADP-forming] subunit beta (388 aa).

Residues 9–243 (KQLFHRYGIP…ESQLAPLEVR (235 aa)) enclose the ATP-grasp domain. Residues Lys45, 52 to 54 (GRG), Glu98, Val101, and Glu106 each bind ATP. Residues Asn198 and Asp212 each coordinate Mg(2+). Substrate-binding positions include Asn263 and 320-322 (GIM).

The protein belongs to the succinate/malate CoA ligase beta subunit family. As to quaternary structure, heterotetramer of two alpha and two beta subunits. Requires Mg(2+) as cofactor.

The enzyme catalyses succinate + ATP + CoA = succinyl-CoA + ADP + phosphate. It carries out the reaction GTP + succinate + CoA = succinyl-CoA + GDP + phosphate. It participates in carbohydrate metabolism; tricarboxylic acid cycle; succinate from succinyl-CoA (ligase route): step 1/1. Its function is as follows. Succinyl-CoA synthetase functions in the citric acid cycle (TCA), coupling the hydrolysis of succinyl-CoA to the synthesis of either ATP or GTP and thus represents the only step of substrate-level phosphorylation in the TCA. The beta subunit provides nucleotide specificity of the enzyme and binds the substrate succinate, while the binding sites for coenzyme A and phosphate are found in the alpha subunit. This Syntrophotalea carbinolica (strain DSM 2380 / NBRC 103641 / GraBd1) (Pelobacter carbinolicus) protein is Succinate--CoA ligase [ADP-forming] subunit beta.